Consider the following 153-residue polypeptide: Histone H2B.10 (153 aa).

Composition is skewed to basic and acidic residues over residues 1–28 (MAPKAEKKPAAKKPAEEEPAAEKAEKAL) and 36–53 (EKRLPAGKAEKSSGEGKK). The tract at residues 1 to 61 (MAPKAEKKPA…KKAGRKKAKK (61 aa)) is disordered. 2 positions are modified to N6-acetyllysine: K7 and K37. K149 participates in a covalent cross-link: Glycyl lysine isopeptide (Lys-Gly) (interchain with G-Cter in ubiquitin).

It belongs to the histone H2B family. The nucleosome is a histone octamer containing two molecules each of H2A, H2B, H3 and H4 assembled in one H3-H4 heterotetramer and two H2A-H2B heterodimers. The octamer wraps approximately 147 bp of DNA. In terms of processing, can be acetylated to form H2BK6ac and H2BK33ac. Monoubiquitinated by BRE1 to form H2BK143ub1 and deubiquitinated by UBP26. Required for heterochromatic histone H3 di- and trimethylation at H3K4me. May give a specific tag for epigenetic transcriptional activation.

The protein localises to the nucleus. It localises to the chromosome. Core component of nucleosome. Nucleosomes wrap and compact DNA into chromatin, limiting DNA accessibility to the cellular machineries which require DNA as a template. Histones thereby play a central role in transcription regulation, DNA repair, DNA replication and chromosomal stability. DNA accessibility is regulated via a complex set of post-translational modifications of histones, also called histone code, and nucleosome remodeling. In Oryza sativa subsp. japonica (Rice), this protein is Histone H2B.10 (H2B.10).